A 51-amino-acid chain; its full sequence is Proteinase inhibitor PTI (51 aa).

Cystine bridges form between Cys-3–Cys-40, Cys-6–Cys-24, Cys-7–Cys-36, and Cys-13–Cys-49.

This sequence belongs to the protease inhibitor I20 (potato type II proteinase inhibitor) family.

The protein resides in the secreted. In Solanum tuberosum (Potato), this protein is Proteinase inhibitor PTI.